Reading from the N-terminus, the 172-residue chain is Dehydratase cfoI (172 aa).

Catalysis depends on residues His-86 and His-111.

This sequence belongs to the scytalone dehydratase family. Homotrimer. Each subunit contains an active site, located in the central part of the hydrophobic core of the monomer, which functions independently.

The protein operates within secondary metabolite biosynthesis; flavonoid biosynthesis. Functionally, cytochrome P450 monooxygenase; part of the gene cluster that mediates the biosynthesis of chlorflavonin, a fungal flavonoid with acetolactate synthase inhibitory activity. Within the pathway, cfoI is responsible for the hydroxylation of the flavonoid skeleton at position C3 with cfoF. The pathway begins with the PKS-NRPS hybrid synthetase cfoA that uses benzoic acid or p-hydroxybenzoic acid as a starter unit with four rounds of chain elongation using malonyl-CoA to form the chalcone skeleton. Then, a new type of chalcone isomerase, cfoK, catalyzes the conversion of the chalcone into a flavanone by a histidine-mediated oxa-Michael addition mechanism. The desaturation of flavanone to flavone is catalyzed by a new type of flavone synthase, the flavin mononucleotide (FMN)-dependent oxidoreductase cfoJ. Monooxygenases cfoF, cfoG, and P450 cfoH are responsible for the hydroxylation of the flavonoid skeleton at sites C3, C8, and C2', respectively. Like cfoF, the dehydratase cfoI plays also a role in the hydroxylation of position C3. Methyltransferases cfoB, cfoC, and cfoD then catalyze the methylation of C7-OH, C8-OH, and C3-OH, respectively. Finally, the monooxygenase cfoE is responsible for the chlorination of flavonoid at position C3'. The sequence is that of Dehydratase cfoI from Aspergillus candidus.